Reading from the N-terminus, the 332-residue chain is Probable xyloglucan endotransglucosylase/hydrolase protein 28 (332 aa).

Residues Met1–Ala22 form the signal peptide. In terms of domain architecture, GH16 spans Leu23–Phe223. The Nucleophile role is filled by Glu108. Glu112 (proton donor) is an active-site residue. Residues Glu112 and Gln125–Asn127 each bind xyloglucan. Asn131 carries an N-linked (GlcNAc...) asparagine glycan. Xyloglucan contacts are provided by residues His135 to Glu139, Lys202 to Trp203, Gly207, and Arg282. Cys277 and Cys290 are oxidised to a cystine. Basic residues predominate over residues His313 to Leu326. Residues His313–Ile332 are disordered.

The protein belongs to the glycosyl hydrolase 16 family. XTH group 3 subfamily. Contains at least one intrachain disulfide bond essential for its enzymatic activity. In terms of tissue distribution, expressed in 7 day old seedlings, roots, rosette leaves, internodes between nodes bearing axillary shoots, nodes bearing flowers, flower buds and siliques.

The protein localises to the secreted. It is found in the cell wall. Its subcellular location is the extracellular space. It localises to the apoplast. It catalyses the reaction breaks a beta-(1-&gt;4) bond in the backbone of a xyloglucan and transfers the xyloglucanyl segment on to O-4 of the non-reducing terminal glucose residue of an acceptor, which can be a xyloglucan or an oligosaccharide of xyloglucan.. Functionally, catalyzes xyloglucan endohydrolysis (XEH) and/or endotransglycosylation (XET). Cleaves and religates xyloglucan polymers, an essential constituent of the primary cell wall, and thereby participates in cell wall construction of growing tissues. The chain is Probable xyloglucan endotransglucosylase/hydrolase protein 28 (XTH28) from Arabidopsis thaliana (Mouse-ear cress).